The sequence spans 558 residues: Galactoside 2-alpha-L-fucosyltransferase (558 aa).

The Cytoplasmic segment spans residues 1–43 (MDQNSYRRRSSPIRTTTGGSKSVNFSELLQMKYLSSGTMKLTR). A helical; Signal-anchor for type II membrane protein membrane pass occupies residues 44 to 64 (TFTTCLIVFSVLVAFSMIFHQ). At 65 to 558 (HPSDSNRIMG…EDISWGLKLV (494 aa)) the chain is on the lumenal side. N-linked (GlcNAc...) asparagine glycosylation is found at asparagine 88 and asparagine 504.

It belongs to the glycosyltransferase 37 family. Homodimer. Interacts with MUR3, XLT2, XXT2 and XXT5. As to expression, expressed in roots, stems, leaves, flowers, siliques and seedlings.

It localises to the golgi apparatus. It is found in the golgi stack membrane. The protein resides in the golgi apparatus membrane. Functionally, involved in cell wall biosynthesis. Is both necessary and sufficient for the addition of the terminal fucosyl residue on xyloglucan side chains, but is not involved in the fucosylation of other cell wall components. Associates with other xyloglucan-synthesizing enzymes to form multiprotein complexes for xyloglucan synthesis in the Golgi. The sequence is that of Galactoside 2-alpha-L-fucosyltransferase (FUT1) from Arabidopsis thaliana (Mouse-ear cress).